Reading from the N-terminus, the 217-residue chain is Large ribosomal subunit protein uL3 (217 aa).

It belongs to the universal ribosomal protein uL3 family. In terms of assembly, part of the 50S ribosomal subunit. Forms a cluster with proteins L14 and L19.

In terms of biological role, one of the primary rRNA binding proteins, it binds directly near the 3'-end of the 23S rRNA, where it nucleates assembly of the 50S subunit. The sequence is that of Large ribosomal subunit protein uL3 from Mycobacterium ulcerans (strain Agy99).